A 697-amino-acid polypeptide reads, in one-letter code: Heat shock protein homolog SSE1 (697 aa).

The span at 664 to 674 (EMAEKLAAQRA) shows a compositional bias: low complexity. Positions 664 to 697 (EMAEKLAAQRAAEQKAQESKAESDKDAEGDIDLD) are disordered. Over residues 675-691 (AEQKAQESKAESDKDAE) the composition is skewed to basic and acidic residues.

Belongs to the heat shock protein 70 family.

The protein localises to the cytoplasm. The protein is Heat shock protein homolog SSE1 (SSE1) of Eremothecium gossypii (strain ATCC 10895 / CBS 109.51 / FGSC 9923 / NRRL Y-1056) (Yeast).